A 146-amino-acid chain; its full sequence is Keratin-associated protein 4-1 (146 aa).

18 tandem repeats follow at residues 5–9 (CCGSV), 24–28 (CCRPS), 29–33 (CCQTT), 34–38 (CCCPS), 44–48 (CCRPS), 54–58 (CCQTT), 59–63 (CCRPS), 64–68 (CCHPV), 69–73 (CCQTT), 83–87 (CCRPL), 88–92 (CCQTT), 102–106 (CCRPL), 107–111 (CCQTT), 121–125 (CCRPL), 126–130 (CCQTT), 131–135 (CCRAT), 136–140 (CCRPS), and 141–145 (CCGSS). The interval 5 to 145 (CCGSVCSDQG…CCRPSCCGSS (141 aa)) is 18 X 5 AA repeats of C-C-[GRQC]-[SPT]-[VSTL].

This sequence belongs to the KRTAP type 4 family. As to quaternary structure, interacts with hair keratins. In terms of tissue distribution, expressed in the hair follicles.

In terms of biological role, in the hair cortex, hair keratin intermediate filaments are embedded in an interfilamentous matrix, consisting of hair keratin-associated proteins (KRTAP), which are essential for the formation of a rigid and resistant hair shaft through their extensive disulfide bond cross-linking with abundant cysteine residues of hair keratins. The matrix proteins include the high-sulfur and high-glycine-tyrosine keratins. This Homo sapiens (Human) protein is Keratin-associated protein 4-1 (KRTAP4-1).